Here is a 567-residue protein sequence, read N- to C-terminus: Glutamate--tRNA ligase (567 aa).

The 'HIGH' region signature appears at 106–116; the sequence is PNPDGPLHLGN.

It belongs to the class-I aminoacyl-tRNA synthetase family. Glutamate--tRNA ligase type 2 subfamily.

Its subcellular location is the cytoplasm. The enzyme catalyses tRNA(Glu) + L-glutamate + ATP = L-glutamyl-tRNA(Glu) + AMP + diphosphate. Functionally, catalyzes the attachment of glutamate to tRNA(Glu) in a two-step reaction: glutamate is first activated by ATP to form Glu-AMP and then transferred to the acceptor end of tRNA(Glu). This is Glutamate--tRNA ligase from Sulfolobus acidocaldarius (strain ATCC 33909 / DSM 639 / JCM 8929 / NBRC 15157 / NCIMB 11770).